Here is a 602-residue protein sequence, read N- to C-terminus: Isocitrate dehydrogenase kinase/phosphatase (602 aa).

Residues 327-333 (APGIKGM) and K348 contribute to the ATP site. D383 is a catalytic residue.

Belongs to the AceK family.

Its subcellular location is the cytoplasm. It carries out the reaction L-seryl-[isocitrate dehydrogenase] + ATP = O-phospho-L-seryl-[isocitrate dehydrogenase] + ADP + H(+). Bifunctional enzyme which can phosphorylate or dephosphorylate isocitrate dehydrogenase (IDH) on a specific serine residue. This is a regulatory mechanism which enables bacteria to bypass the Krebs cycle via the glyoxylate shunt in response to the source of carbon. When bacteria are grown on glucose, IDH is fully active and unphosphorylated, but when grown on acetate or ethanol, the activity of IDH declines drastically concomitant with its phosphorylation. This is Isocitrate dehydrogenase kinase/phosphatase from Paraburkholderia phymatum (strain DSM 17167 / CIP 108236 / LMG 21445 / STM815) (Burkholderia phymatum).